The following is a 372-amino-acid chain: Anhydro-N-acetylmuramic acid kinase (372 aa).

An ATP-binding site is contributed by Gly-14–Asp-21.

The protein belongs to the anhydro-N-acetylmuramic acid kinase family.

It catalyses the reaction 1,6-anhydro-N-acetyl-beta-muramate + ATP + H2O = N-acetyl-D-muramate 6-phosphate + ADP + H(+). Its pathway is amino-sugar metabolism; 1,6-anhydro-N-acetylmuramate degradation. The protein operates within cell wall biogenesis; peptidoglycan recycling. In terms of biological role, catalyzes the specific phosphorylation of 1,6-anhydro-N-acetylmuramic acid (anhMurNAc) with the simultaneous cleavage of the 1,6-anhydro ring, generating MurNAc-6-P. Is required for the utilization of anhMurNAc either imported from the medium or derived from its own cell wall murein, and thus plays a role in cell wall recycling. The protein is Anhydro-N-acetylmuramic acid kinase of Photorhabdus laumondii subsp. laumondii (strain DSM 15139 / CIP 105565 / TT01) (Photorhabdus luminescens subsp. laumondii).